The following is a 472-amino-acid chain: ATP synthase subunit beta (472 aa).

ATP is bound at residue 157–164 (GGAGVGKT).

Belongs to the ATPase alpha/beta chains family. F-type ATPases have 2 components, CF(1) - the catalytic core - and CF(0) - the membrane proton channel. CF(1) has five subunits: alpha(3), beta(3), gamma(1), delta(1), epsilon(1). CF(0) has three main subunits: a(1), b(2) and c(9-12). The alpha and beta chains form an alternating ring which encloses part of the gamma chain. CF(1) is attached to CF(0) by a central stalk formed by the gamma and epsilon chains, while a peripheral stalk is formed by the delta and b chains.

The protein localises to the cell membrane. The catalysed reaction is ATP + H2O + 4 H(+)(in) = ADP + phosphate + 5 H(+)(out). Produces ATP from ADP in the presence of a proton gradient across the membrane. The catalytic sites are hosted primarily by the beta subunits. The polypeptide is ATP synthase subunit beta (Desulforudis audaxviator (strain MP104C)).